Reading from the N-terminus, the 137-residue chain is Small ribosomal subunit protein uS12 (137 aa).

Residues 1 to 57 form a disordered region; that stretch reads MPTINQLVRKPRKSKTKQSDSPVLNRGFNSKKKQFTNLNSPQKRGVCTRVGTMTPRK. Aspartate 102 bears the 3-methylthioaspartic acid mark. The tract at residues 118–137 is disordered; the sequence is SGVDGRRQGRSLYGTKKPKN.

The protein belongs to the universal ribosomal protein uS12 family. In terms of assembly, part of the 30S ribosomal subunit. Contacts proteins S8 and S17. May interact with IF1 in the 30S initiation complex.

Functionally, with S4 and S5 plays an important role in translational accuracy. Interacts with and stabilizes bases of the 16S rRNA that are involved in tRNA selection in the A site and with the mRNA backbone. Located at the interface of the 30S and 50S subunits, it traverses the body of the 30S subunit contacting proteins on the other side and probably holding the rRNA structure together. The combined cluster of proteins S8, S12 and S17 appears to hold together the shoulder and platform of the 30S subunit. The polypeptide is Small ribosomal subunit protein uS12 (Staphylococcus epidermidis (strain ATCC 12228 / FDA PCI 1200)).